We begin with the raw amino-acid sequence, 510 residues long: MIWHVQNENFILDSTRIFMKAFHLLLFHGSFIFPECILIFGLILLLMIDSTSDQKDRPWFYFISSTSLIISITALLFRWREEPIISFSGNFQTNNFNEIFQFLILLCSTLCIPLSVEYIECTEMAITEFLLFVLTATLGGMFLCGANDLITIFVAPECFSLCSYLLSGYTKRDVRSNEATMKYLLMGGASSSILVHGFSWLYGSSGGEIELQEIVNGLINTQMYNSPGISIALISITVGIGFKLSPAPFHQWTPDVYEGSPTPVVAFLSVTSKVAASASATRIFDIPFYFSSNEWHLLLEILAILSMILGNLIAITQTSMKRMLAYSSIGQIGYVIIGIIVGDSNDGYASMITYMLFYISMNLGTFACIVLFGLRTGTDNIRDYAGLYTKDPFLALSSALCLLSLGGLPPLAGFFGKLHLFWCGWQAGLYFLVSIGLLTSVVSIYYYLKIIKLLMTGRNQEITPYVRNYRRSPLRSNNSIELSMTVCVIASTIPGISMNPILAIAQDTLF.

The next 12 helical transmembrane spans lie at 24–44 (LLLF…GLIL), 59–79 (WFYF…LFRW), 99–119 (IFQF…VEYI), 124–144 (MAIT…MFLC), 149–169 (LITI…LSGY), 183–203 (YLLM…WLYG), 229–249 (ISIA…PAPF), 295–315 (WHLL…LIAI), 323–343 (MLAY…IVGD), 354–374 (YMLF…LFGL), 395–415 (ALSS…AGFF), and 418–438 (LHLF…IGLL).

It belongs to the complex I subunit 2 family. NDH is composed of at least 16 different subunits, 5 of which are encoded in the nucleus.

It is found in the plastid. It localises to the chloroplast thylakoid membrane. It carries out the reaction a plastoquinone + NADH + (n+1) H(+)(in) = a plastoquinol + NAD(+) + n H(+)(out). The catalysed reaction is a plastoquinone + NADPH + (n+1) H(+)(in) = a plastoquinol + NADP(+) + n H(+)(out). Functionally, NDH shuttles electrons from NAD(P)H:plastoquinone, via FMN and iron-sulfur (Fe-S) centers, to quinones in the photosynthetic chain and possibly in a chloroplast respiratory chain. The immediate electron acceptor for the enzyme in this species is believed to be plastoquinone. Couples the redox reaction to proton translocation, and thus conserves the redox energy in a proton gradient. The polypeptide is NAD(P)H-quinone oxidoreductase subunit 2, chloroplastic (Ensete ventricosum (Abyssinian banana)).